We begin with the raw amino-acid sequence, 347 residues long: Tsukushi (347 aa).

Residues 1–19 (MASLLCLFFSLLGLAAIGA) form the signal peptide. The 42-residue stretch at 20–61 (VKNCHPQCRCEVETFGLFDSFSLTKVDCSRIGPGNTPVPIPL) folds into the LRRNT domain. 10 LRR repeats span residues 62–83 (DTSH…MLSG), 88–109 (TLVS…AFSK), 112–133 (YLET…CFTG), 135–156 (PLVE…LFTT), 160–175 (DLPI…LTSI), 185–205 (YIKS…LNGI), 206–227 (PLQY…AFDS), 230–252 (ELVH…AFRS), 255–277 (NLQA…VFSG), and 280–301 (SLQE…VFMQ). Asn285 carries an N-linked (GlcNAc...) asparagine glycan.

As to quaternary structure, forms a ternary complex with chordin/CHRD and BMP4.

Its subcellular location is the secreted. Functionally, contributes to various developmental events through its interactions with multiple signaling pathways. Dorsalizing factor which functions as an inhibitor of bone morphogenetic proteins during gastrulation. The protein is Tsukushi (tsku) of Danio rerio (Zebrafish).